A 197-amino-acid polypeptide reads, in one-letter code: Nucleoside triphosphate pyrophosphatase (197 aa).

The active-site Proton acceptor is Asp-71.

The protein belongs to the Maf family. A divalent metal cation serves as cofactor.

The protein resides in the cytoplasm. It carries out the reaction a ribonucleoside 5'-triphosphate + H2O = a ribonucleoside 5'-phosphate + diphosphate + H(+). It catalyses the reaction a 2'-deoxyribonucleoside 5'-triphosphate + H2O = a 2'-deoxyribonucleoside 5'-phosphate + diphosphate + H(+). Functionally, nucleoside triphosphate pyrophosphatase. May have a dual role in cell division arrest and in preventing the incorporation of modified nucleotides into cellular nucleic acids. The polypeptide is Nucleoside triphosphate pyrophosphatase (Trichormus variabilis (strain ATCC 29413 / PCC 7937) (Anabaena variabilis)).